The primary structure comprises 969 residues: Probable Rho-type GTPase-activating protein 3 (969 aa).

2 consecutive LIM zinc-binding domains span residues 17–81 (TVCF…CTAC) and 76–135 (HTCT…RHPS). 3 disordered regions span residues 170-223 (IEIM…ADSL), 348-459 (ATSP…VEEL), and 613-646 (TSSK…SPNL). Residues 193–202 (ETPTNMSQAE) are compositionally biased toward polar residues. 2 stretches are compositionally biased toward low complexity: residues 212–223 (DSNLASNSADSL) and 350–361 (SPFRPFSPSYRS). 2 stretches are compositionally biased toward polar residues: residues 369 to 392 (TRSP…SFAQ) and 418 to 432 (LSET…SLGS). Positions 450–459 (SERDSDVEEL) are enriched in basic and acidic residues. The span at 613–623 (TSSKNTTSSIN) shows a compositional bias: low complexity. Residues 624-637 (PLTAVSSNSGQSSG) show a composition bias toward polar residues. The Phorbol-ester/DAG-type zinc-finger motif lies at 697-744 (DHVFHVNAIFKPSRCYICSESVWGSELRCFHCSISCHSRCLKRLFAES). One can recognise a Rho-GAP domain in the interval 780–966 (RSLENQLKIE…FMLDNVDKIL (187 aa)).

As to quaternary structure, interacts with dil1.

Its subcellular location is the cell tip. GTPase-activating protein for Rho-type proteins. The polypeptide is Probable Rho-type GTPase-activating protein 3 (rga3) (Schizosaccharomyces pombe (strain 972 / ATCC 24843) (Fission yeast)).